A 267-amino-acid chain; its full sequence is Glutamate racemase (267 aa).

Substrate is bound by residues 13 to 14 and 45 to 46; these read DS and YS. Catalysis depends on Cys77, which acts as the Proton donor/acceptor. 78–79 provides a ligand contact to substrate; it reads NT. Cys188 acts as the Proton donor/acceptor in catalysis. 189-190 contributes to the substrate binding site; that stretch reads TH.

Belongs to the aspartate/glutamate racemases family.

The enzyme catalyses L-glutamate = D-glutamate. Its pathway is cell wall biogenesis; peptidoglycan biosynthesis. Functionally, provides the (R)-glutamate required for cell wall biosynthesis. In Histophilus somni (strain 2336) (Haemophilus somnus), this protein is Glutamate racemase.